We begin with the raw amino-acid sequence, 196 residues long: DNA replication complex GINS protein PSF1 (196 aa).

Belongs to the GINS1/PSF1 family. As to quaternary structure, component of the GINS complex which is a heterotetramer of GINS1, GINS2, GINS3 and GINS4. Forms a stable subcomplex with GINS4. GINS complex interacts with DNA primase in vitro. Component of the CMG helicase complex, a hexameric ring of related MCM2-7 subunits stabilized by CDC45 and the tetrameric GINS complex.

Its subcellular location is the nucleus. It is found in the chromosome. Functionally, required for correct functioning of the GINS complex, a complex that plays an essential role in the initiation of DNA replication, and progression of DNA replication forks. GINS complex is a core component of CDC45-MCM-GINS (CMG) helicase, the molecular machine that unwinds template DNA during replication, and around which the replisome is built. The sequence is that of DNA replication complex GINS protein PSF1 (Gins1) from Mus musculus (Mouse).